A 695-amino-acid polypeptide reads, in one-letter code: Hypersensitivity response secretion protein HrpI (695 aa).

7 consecutive transmembrane segments (helical) span residues 21-38 (LVGA…ITPL), 45-61 (VLIA…IMLA), 68-92 (LAFS…VSTT), 111-135 (FVVG…FLVI), 203-223 (AIAS…IGVL), 244-262 (GLIA…GMII), and 311-327 (VFIT…LLQL).

It belongs to the FHIPEP (flagella/HR/invasion proteins export pore) family.

It is found in the cell inner membrane. Its function is as follows. Involved in the secretion of harpin-pss; a proteinaceous elicitor of the hypersensitivity response in plants. In Pseudomonas syringae pv. syringae, this protein is Hypersensitivity response secretion protein HrpI (hrpI).